The primary structure comprises 458 residues: MVGSGAAGGGGGGGGGGDHARSKEAAGMMALHEALRNVCLNSDWTYSVFWTIRPRPRCRGGNGCKVGDDNGSLMLMWEDGFCRPRVAECLEDIDGEDPVRKAFSKMSIQLYNYGEGLMGKVASDKCHKWVFKEPSECEPNIANYWQSSFDALPPEWTDQFASGIQTIAVIQAGHGLLQLGSCKIIPEDLHFVLRMRHMFESLGYQSGFFLSQLFSSSRGTSPSPSSFPLKQQQPPPPQLFNWPGHAPPQLPPGASPLFPPGPAAFHPSSRPMPPFPGGGKDESHLFHLPPAAAAKQPQHMDEHHHHQQQPMAAPQQHGGEAPEGDLKWPNGLSFFTALTGRTEDAKFLFGGGGGGGADDGSKTAAAAQDAGHGGAENVEEYLSLESHSNKARRMESAQSTKFKRSFTLPARMSSSTTSTSPSVSASTAPAPPQQQQGMEYRGPHEGGVYSDLMETFLE.

The segment covering 1–17 has biased composition (gly residues); it reads MVGSGAAGGGGGGGGGG. Disordered regions lie at residues 1–21, 220–325, 354–374, and 386–458; these read MVGSGAAGGGGGGGGGGDHAR, TSPS…PEGD, GGGADDGSKTAAAAQDAGHGG, and SHSN…TFLE. The segment covering 220 to 232 has biased composition (low complexity); it reads TSPSPSSFPLKQQ. Over residues 245–262 the composition is skewed to pro residues; it reads HAPPQLPPGASPLFPPGP. The segment covering 308-317 has biased composition (low complexity); the sequence is QQPMAAPQQH. Low complexity predominate over residues 413-436; that stretch reads SSSTTSTSPSVSASTAPAPPQQQQ.

As to quaternary structure, interacts with BHLH094, BHLH089, TIFY11A/JAZ9 and TIFY11C/JAZ11. Forms a ternary complex with TIFY11A/JAZ9 and BHLH094 in the nucleus. In terms of tissue distribution, expressed in root tips. Expressed at high levels in the meristematic zone and at low levels in the elongation zone of the root tip.

The protein localises to the nucleus. The protein resides in the cytoplasm. Functionally, involved in the repression of jasmonate (JA)-induced genes. Forms a ternary complex with TIFY11A/JAZ9 and BHLH094 to negatively regulate JA-responsive genes. Involved in transcriptional regulation in the root tip. Plays a regulatory role in root cell elongation. Regulates root cell elongation during salt stress. The sequence is that of Protein RICE SALT SENSITIVE 3 from Oryza sativa subsp. japonica (Rice).